The sequence spans 449 residues: BPI fold-containing family B member 6 (449 aa).

Residues 1-18 (MLCSLSLVLCGLLAGTRA) form the signal peptide. The N-linked (GlcNAc...) asparagine glycan is linked to asparagine 115. Cysteine 138 and cysteine 172 are joined by a disulfide.

This sequence belongs to the BPI/LBP/Plunc superfamily. BPI/LBP family.

It is found in the secreted. This is BPI fold-containing family B member 6 (Bpifb6) from Mus musculus (Mouse).